The sequence spans 305 residues: Translation initiation factor eIF2B subunit alpha (305 aa).

The residue at position 35 (Lys35) is an N6-acetyllysine.

This sequence belongs to the eIF-2B alpha/beta/delta subunits family. As to quaternary structure, component of the translation initiation factor 2B (eIF2B) complex which is a heterodecamer of two sets of five different subunits: alpha, beta, gamma, delta and epsilon. Subunits alpha, beta and delta comprise a regulatory subcomplex and subunits epsilon and gamma comprise a catalytic subcomplex. Within the complex, the hexameric regulatory complex resides at the center, with the two heterodimeric catalytic subcomplexes bound on opposite sides.

Its subcellular location is the cytoplasm. It is found in the cytosol. Activated by the chemical integrated stress response (ISR) inhibitor ISRIB which stimulates guanine nucleotide exchange factor activity for both phosphorylated and unphosphorylated eIF2. Acts as a component of the translation initiation factor 2B (eIF2B) complex, which catalyzes the exchange of GDP for GTP on eukaryotic initiation factor 2 (eIF2) gamma subunit. Its guanine nucleotide exchange factor activity is repressed when bound to eIF2 complex phosphorylated on the alpha subunit, thereby limiting the amount of methionyl-initiator methionine tRNA available to the ribosome and consequently global translation is repressed. The polypeptide is Translation initiation factor eIF2B subunit alpha (EIF2B1) (Macaca fascicularis (Crab-eating macaque)).